The chain runs to 282 residues: Bis(5'-nucleosyl)-tetraphosphatase, symmetrical (282 aa).

It belongs to the Ap4A hydrolase family.

It carries out the reaction P(1),P(4)-bis(5'-adenosyl) tetraphosphate + H2O = 2 ADP + 2 H(+). In terms of biological role, hydrolyzes diadenosine 5',5'''-P1,P4-tetraphosphate to yield ADP. The polypeptide is Bis(5'-nucleosyl)-tetraphosphatase, symmetrical (Salmonella agona (strain SL483)).